We begin with the raw amino-acid sequence, 519 residues long: 2-isopropylmalate synthase (519 aa).

Residues 12–274 (VVIFDTTLRD…WCNVESTMLT (263 aa)) enclose the Pyruvate carboxyltransferase domain. Asp-21, His-209, His-211, and Asn-245 together coordinate Mn(2+). Residues 398-519 (KLSSLTVIAG…QRDVPAAAAS (122 aa)) form a regulatory domain region.

The protein belongs to the alpha-IPM synthase/homocitrate synthase family. LeuA type 1 subfamily. As to quaternary structure, homodimer. Mn(2+) is required as a cofactor.

The protein localises to the cytoplasm. The enzyme catalyses 3-methyl-2-oxobutanoate + acetyl-CoA + H2O = (2S)-2-isopropylmalate + CoA + H(+). It functions in the pathway amino-acid biosynthesis; L-leucine biosynthesis; L-leucine from 3-methyl-2-oxobutanoate: step 1/4. Its function is as follows. Catalyzes the condensation of the acetyl group of acetyl-CoA with 3-methyl-2-oxobutanoate (2-ketoisovalerate) to form 3-carboxy-3-hydroxy-4-methylpentanoate (2-isopropylmalate). The polypeptide is 2-isopropylmalate synthase (Nitrobacter winogradskyi (strain ATCC 25391 / DSM 10237 / CIP 104748 / NCIMB 11846 / Nb-255)).